Here is a 374-residue protein sequence, read N- to C-terminus: CC-adding tRNA nucleotidyltransferase (374 aa).

CTP is bound at residue 39–42 (GAVR). Mg(2+) contacts are provided by Asp-52 and Asp-54. CTP is bound by residues 126–127 (RD), Asn-131, 171–180 (DASRLVRAAR), and Arg-209.

The protein belongs to the tRNA nucleotidyltransferase/poly(A) polymerase family. It depends on Mg(2+) as a cofactor.

The catalysed reaction is a tRNA precursor + 2 CTP = a tRNA with a 3' CC end + 2 diphosphate. Functionally, tRNA nucleotidyltransferase involved in the synthesis of the tRNA CCA terminus. Adds the two cytidine residues to tRNA. The chain is CC-adding tRNA nucleotidyltransferase from Deinococcus radiodurans (strain ATCC 13939 / DSM 20539 / JCM 16871 / CCUG 27074 / LMG 4051 / NBRC 15346 / NCIMB 9279 / VKM B-1422 / R1).